We begin with the raw amino-acid sequence, 235 residues long: Uridylate kinase (235 aa).

8–11 (KLSG) is a binding site for ATP. G49 contacts UMP. Residues G50 and R54 each coordinate ATP. Position 131–138 (131–138 (TGNPYFST)) interacts with UMP. Positions 159, 165, and 168 each coordinate ATP.

This sequence belongs to the UMP kinase family. As to quaternary structure, homohexamer.

Its subcellular location is the cytoplasm. It catalyses the reaction UMP + ATP = UDP + ADP. The protein operates within pyrimidine metabolism; CTP biosynthesis via de novo pathway; UDP from UMP (UMPK route): step 1/1. Inhibited by UTP. Its function is as follows. Catalyzes the reversible phosphorylation of UMP to UDP. The protein is Uridylate kinase of Mycoplasma pneumoniae (strain ATCC 29342 / M129 / Subtype 1) (Mycoplasmoides pneumoniae).